The sequence spans 132 residues: UPF0299 membrane protein Ent638_2744 (132 aa).

The next 4 membrane-spanning stretches (helical) occupy residues 8–28 (VWQY…GIFI), 31–51 (LLPI…LLLA), 63–83 (GCFV…VGVM), and 93–113 (FGPI…VVSW).

The protein belongs to the UPF0299 family.

It is found in the cell inner membrane. The chain is UPF0299 membrane protein Ent638_2744 from Enterobacter sp. (strain 638).